A 198-amino-acid chain; its full sequence is MEHYISLLVKSIFIENMALSFFLGMCTFLAVSKKVKTSFGLGVAVVVVLTIAVPVNNLVYTYLLKENALVAGVDLTFLSFITFIGVIAALVQILEMILDRFFPPLYNALGIFLPLITVNCAIFGGVSFMVQRDYNFAESVVYGFGSGIGWMLAIVALAGIREKMKYSDVPPGLRGLGITFITVGLMALGFMSFSGVQL.

The next 6 helical transmembrane spans lie at 11-31 (SIFI…FLAV), 39-59 (FGLG…NNLV), 77-97 (FLSF…LEMI), 110-130 (GIFL…SFMV), 140-160 (VVYG…LAGI), and 176-196 (LGIT…FSGV).

This sequence belongs to the NqrDE/RnfAE family. Composed of six subunits; NqrA, NqrB, NqrC, NqrD, NqrE and NqrF.

Its subcellular location is the cell inner membrane. The enzyme catalyses a ubiquinone + n Na(+)(in) + NADH + H(+) = a ubiquinol + n Na(+)(out) + NAD(+). In terms of biological role, NQR complex catalyzes the reduction of ubiquinone-1 to ubiquinol by two successive reactions, coupled with the transport of Na(+) ions from the cytoplasm to the periplasm. NqrA to NqrE are probably involved in the second step, the conversion of ubisemiquinone to ubiquinol. This is Na(+)-translocating NADH-quinone reductase subunit E from Aliivibrio fischeri (strain ATCC 700601 / ES114) (Vibrio fischeri).